Consider the following 403-residue polypeptide: Argininosuccinate synthase (403 aa).

10–18 (AYSGGLDTS) contacts ATP. Tyrosine 87 contributes to the L-citrulline binding site. Residue glycine 117 participates in ATP binding. Residues threonine 119, asparagine 123, and aspartate 124 each coordinate L-aspartate. Asparagine 123 lines the L-citrulline pocket. 4 residues coordinate L-citrulline: arginine 127, serine 175, glutamate 260, and tyrosine 272.

This sequence belongs to the argininosuccinate synthase family. Type 1 subfamily. Homotetramer.

It localises to the cytoplasm. The catalysed reaction is L-citrulline + L-aspartate + ATP = 2-(N(omega)-L-arginino)succinate + AMP + diphosphate + H(+). It participates in amino-acid biosynthesis; L-arginine biosynthesis; L-arginine from L-ornithine and carbamoyl phosphate: step 2/3. The polypeptide is Argininosuccinate synthase (Bacillus velezensis (strain DSM 23117 / BGSC 10A6 / LMG 26770 / FZB42) (Bacillus amyloliquefaciens subsp. plantarum)).